The following is a 373-amino-acid chain: Ribonuclease D (373 aa).

In terms of domain architecture, 3'-5' exonuclease spans 3 to 171; the sequence is YQLITTDAGL…MAKRLVQETE (169 aa). Positions 210–289 constitute an HRDC domain; the sequence is RPRQLGCLQK…AEAAELEESA (80 aa).

This sequence belongs to the RNase D family. A divalent metal cation serves as cofactor.

The protein localises to the cytoplasm. It carries out the reaction Exonucleolytic cleavage that removes extra residues from the 3'-terminus of tRNA to produce 5'-mononucleotides.. Its function is as follows. Exonuclease involved in the 3' processing of various precursor tRNAs. Initiates hydrolysis at the 3'-terminus of an RNA molecule and releases 5'-mononucleotides. The polypeptide is Ribonuclease D (Serratia proteamaculans (strain 568)).